Reading from the N-terminus, the 73-residue chain is uncharacterized protein (73 aa).

An N-terminal signal peptide occupies residues 1–21 (MTLFSSLSSLSTGSLKSSVSS). Residues 1–38 (MTLFSSLSSLSTGSLKSSVSSIETGSSSGSFGSNETSG) show a composition bias toward low complexity. Residues 1–43 (MTLFSSLSSLSTGSLKSSVSSIETGSSSGSFGSNETSGWGSHH) are disordered. N34 carries N-linked (GlcNAc...) asparagine glycosylation.

The protein resides in the secreted. This is an uncharacterized protein from Dictyostelium discoideum (Social amoeba).